The chain runs to 234 residues: Ribonuclease 3 (234 aa).

The RNase III domain occupies 4–133 (LLDLEHKLNY…ILGAVYIDSN (130 aa)). Glu46 serves as a coordination point for Mg(2+). Residue Asp50 is part of the active site. Residues Asp119 and Glu122 each contribute to the Mg(2+) site. Residue Glu122 is part of the active site. The 69-residue stretch at 160 to 228 (DFKSILQEYV…AKALCIKLGV (69 aa)) folds into the DRBM domain.

It belongs to the ribonuclease III family. Homodimer. Requires Mg(2+) as cofactor.

The protein localises to the cytoplasm. The enzyme catalyses Endonucleolytic cleavage to 5'-phosphomonoester.. Digests double-stranded RNA. Involved in the processing of primary rRNA transcript to yield the immediate precursors to the large and small rRNAs (23S and 16S). Processes some mRNAs, and tRNAs when they are encoded in the rRNA operon. Processes pre-crRNA and tracrRNA of type II CRISPR loci if present in the organism. The sequence is that of Ribonuclease 3 from Fusobacterium nucleatum subsp. nucleatum (strain ATCC 25586 / DSM 15643 / BCRC 10681 / CIP 101130 / JCM 8532 / KCTC 2640 / LMG 13131 / VPI 4355).